Consider the following 588-residue polypeptide: Interferon-activable protein 208 (588 aa).

A Pyrin domain is found at methionine 5 to lysine 92. Disordered regions lie at residues alanine 157–threonine 183 and glutamate 469–asparagine 526. Composition is skewed to polar residues over residues arginine 172–threonine 183 and methionine 470–leucine 487.

It belongs to the HIN-200 family.

This Mus musculus (Mouse) protein is Interferon-activable protein 208.